The chain runs to 795 residues: Protein translocase subunit SecA 2 (795 aa).

ATP is bound by residues Gln-84, 102 to 106 (GEGKT), and Asp-496.

The protein belongs to the SecA family. In terms of assembly, monomer and homodimer. Part of the essential Sec protein translocation apparatus which comprises SecA, SecYEG and auxiliary proteins SecDF. Other proteins may also be involved.

It is found in the cell membrane. Its subcellular location is the cytoplasm. It carries out the reaction ATP + H2O + cellular proteinSide 1 = ADP + phosphate + cellular proteinSide 2.. Part of the Sec protein translocase complex. Interacts with the SecYEG preprotein conducting channel. Has a central role in coupling the hydrolysis of ATP to the transfer of proteins into and across the cell membrane, serving as an ATP-driven molecular motor driving the stepwise translocation of polypeptide chains across the membrane. The protein is Protein translocase subunit SecA 2 of Streptococcus agalactiae serotype III (strain NEM316).